Reading from the N-terminus, the 138-residue chain is Aspartate 1-decarboxylase (138 aa).

The Schiff-base intermediate with substrate; via pyruvic acid role is filled by Ser-25. Ser-25 bears the Pyruvic acid (Ser) mark. Thr-57 lines the substrate pocket. Tyr-58 (proton donor) is an active-site residue. Substrate is bound at residue 73-75; that stretch reads GAA. A disordered region spans residues 116–138; the sequence is ELGGDPAQVPDGSGLKNPRHPEA.

This sequence belongs to the PanD family. As to quaternary structure, heterooctamer of four alpha and four beta subunits. It depends on pyruvate as a cofactor. In terms of processing, is synthesized initially as an inactive proenzyme, which is activated by self-cleavage at a specific serine bond to produce a beta-subunit with a hydroxyl group at its C-terminus and an alpha-subunit with a pyruvoyl group at its N-terminus.

Its subcellular location is the cytoplasm. It carries out the reaction L-aspartate + H(+) = beta-alanine + CO2. Its pathway is cofactor biosynthesis; (R)-pantothenate biosynthesis; beta-alanine from L-aspartate: step 1/1. In terms of biological role, catalyzes the pyruvoyl-dependent decarboxylation of aspartate to produce beta-alanine. In Corynebacterium jeikeium (strain K411), this protein is Aspartate 1-decarboxylase.